Reading from the N-terminus, the 90-residue chain is MSFLNVFSSRPTPKQVAKDRLKVILIHDRGELSDEVLDKIRLEILDVLSKYVEIENEDVDITVTKSNAIEGESPSLVANIPIKNIKGKAR.

This sequence belongs to the MinE family.

In terms of biological role, prevents the cell division inhibition by proteins MinC and MinD at internal division sites while permitting inhibition at polar sites. This ensures cell division at the proper site by restricting the formation of a division septum at the midpoint of the long axis of the cell. This is Cell division topological specificity factor from Clostridium perfringens (strain SM101 / Type A).